We begin with the raw amino-acid sequence, 191 residues long: Putative glutathione-dependent formaldehyde-activating enzyme (191 aa).

The region spanning 20–166 is the CENP-V/GFA domain; sequence FAGGKLRCHC…FKALGLQTYD (147 aa). 7 residues coordinate Zn(2+): C27, C29, C48, C50, C53, C95, and C98.

This sequence belongs to the Gfa family. Requires Zn(2+) as cofactor.

It catalyses the reaction S-(hydroxymethyl)glutathione = glutathione + formaldehyde. It participates in one-carbon metabolism; formaldehyde degradation; formate from formaldehyde (glutathione route): step 1/3. Functionally, catalyzes the condensation of formaldehyde and glutathione to S-hydroxymethylglutathione. In Penicillium rubens (strain ATCC 28089 / DSM 1075 / NRRL 1951 / Wisconsin 54-1255) (Penicillium chrysogenum), this protein is Putative glutathione-dependent formaldehyde-activating enzyme.